The sequence spans 340 residues: Protein-tyrosine-phosphatase PTP1 (340 aa).

The Tyrosine-protein phosphatase domain occupies 58–326; sequence IAHEFTGLQA…FFCYNAIVDE (269 aa). Substrate is bound by residues Asp234, 265 to 271, and Gln311; that span reads CSAGIGR. Cys265 (phosphocysteine intermediate) is an active-site residue.

Interacts with MPK6. Interacts with KIN10. Post-translationally, phosphorylated by KIN10. In terms of tissue distribution, expressed in roots, stems and flowers, and at low levels in leaves.

The protein localises to the cytoplasm. It is found in the cytosol. It localises to the nucleus. It carries out the reaction O-phospho-L-tyrosyl-[protein] + H2O = L-tyrosyl-[protein] + phosphate. Inhibited by hydrogen peroxide. Its function is as follows. Protein-tyrosine-phosphatase that dephosphorylates and probably inhibits MPK6 in non-oxidative stress conditions. In association with MKP1, represses salicylic acid (SA) and camalexin biosynthesis, thus modulating defense response. May also repress MPK3. Dephosphorylates and inactivates MPK4 in vitro. The chain is Protein-tyrosine-phosphatase PTP1 (PTP1) from Arabidopsis thaliana (Mouse-ear cress).